Consider the following 158-residue polypeptide: Small ribosomal subunit protein uS7 (158 aa).

The protein belongs to the universal ribosomal protein uS7 family. Part of the 30S ribosomal subunit. Contacts proteins S9 and S11.

Functionally, one of the primary rRNA binding proteins, it binds directly to 16S rRNA where it nucleates assembly of the head domain of the 30S subunit. Is located at the subunit interface close to the decoding center, probably blocks exit of the E-site tRNA. The chain is Small ribosomal subunit protein uS7 from Granulibacter bethesdensis (strain ATCC BAA-1260 / CGDNIH1).